The following is a 291-amino-acid chain: Shikimate dehydrogenase (NADP(+)) (291 aa).

Shikimate-binding positions include 18-20 and T70; that span reads SLS. Residue K74 is the Proton acceptor of the active site. N95 and D110 together coordinate shikimate. NADP(+)-binding positions include 134 to 138 and V228; that span reads GAGGA. Residue Y230 participates in shikimate binding. An NADP(+)-binding site is contributed by G251.

This sequence belongs to the shikimate dehydrogenase family. Homodimer.

The catalysed reaction is shikimate + NADP(+) = 3-dehydroshikimate + NADPH + H(+). Its pathway is metabolic intermediate biosynthesis; chorismate biosynthesis; chorismate from D-erythrose 4-phosphate and phosphoenolpyruvate: step 4/7. Involved in the biosynthesis of the chorismate, which leads to the biosynthesis of aromatic amino acids. Catalyzes the reversible NADPH linked reduction of 3-dehydroshikimate (DHSA) to yield shikimate (SA). The sequence is that of Shikimate dehydrogenase (NADP(+)) from Streptomyces avermitilis (strain ATCC 31267 / DSM 46492 / JCM 5070 / NBRC 14893 / NCIMB 12804 / NRRL 8165 / MA-4680).